Here is a 396-residue protein sequence, read N- to C-terminus: Elongation factor Tu (396 aa).

Residues 10 to 206 (KPHVNVGTIG…ALDTYIPTPE (197 aa)) enclose the tr-type G domain. Residues 19 to 26 (GHVDHGKT) form a G1 region. Residue 19 to 26 (GHVDHGKT) participates in GTP binding. Mg(2+) is bound at residue T26. Residues 60 to 64 (GITIN) are G2. The tract at residues 81–84 (DCPG) is G3. Residues 81-85 (DCPGH) and 136-139 (NKAD) contribute to the GTP site. A G4 region spans residues 136 to 139 (NKAD). The tract at residues 174–176 (SAK) is G5.

Belongs to the TRAFAC class translation factor GTPase superfamily. Classic translation factor GTPase family. EF-Tu/EF-1A subfamily. Monomer.

The protein resides in the cytoplasm. It catalyses the reaction GTP + H2O = GDP + phosphate + H(+). Functionally, GTP hydrolase that promotes the GTP-dependent binding of aminoacyl-tRNA to the A-site of ribosomes during protein biosynthesis. The polypeptide is Elongation factor Tu (Bordetella bronchiseptica (strain ATCC BAA-588 / NCTC 13252 / RB50) (Alcaligenes bronchisepticus)).